Here is a 159-residue protein sequence, read N- to C-terminus: Xanthine dehydrogenase iron-sulfur-binding subunit (159 aa).

The 76-residue stretch at isoleucine 7 to glutamate 82 folds into the 2Fe-2S ferredoxin-type domain. 3 residues coordinate [2Fe-2S] cluster: cysteine 44, cysteine 49, and cysteine 52.

In terms of assembly, heterotrimer of XdhA, XdhB and XdhC. The cofactor is [2Fe-2S] cluster.

It participates in purine metabolism; hypoxanthine degradation; urate from hypoxanthine: step 1/2. Iron-sulfur subunit of the xanthine dehydrogenase complex. In Escherichia coli O157:H7, this protein is Xanthine dehydrogenase iron-sulfur-binding subunit (xdhC).